A 639-amino-acid polypeptide reads, in one-letter code: Complex I assembly factor Egm, mitochondrial (639 aa).

The transit peptide at 1-26 directs the protein to the mitochondrion; it reads MRPNLFSGASRLLTYSRNGKLLTRGR. Residues 23 to 65 form a disordered region; sequence TRGRSTKATSSSLDSQHQDAATTEGGRAESVEESPEQQRKLPT. The segment covering 28-43 has biased composition (polar residues); the sequence is TKATSSSLDSQHQDAA. A compositionally biased stretch (basic and acidic residues) spans 48 to 65; sequence GRAESVEESPEQQRKLPT.

This sequence belongs to the acyl-CoA dehydrogenase family. As to quaternary structure, associates with mitochondrial complex I assembly intermediates during its biogenesis. It depends on FAD as a cofactor.

It is found in the mitochondrion. Functionally, as part of the MCIA complex, primarily participates in the assembly of the mitochondrial complex I and therefore plays a role in oxidative phosphorylation. This is Complex I assembly factor Egm, mitochondrial from Drosophila melanogaster (Fruit fly).